Reading from the N-terminus, the 532-residue chain is CTP synthase (532 aa).

The interval 1 to 269 is amidoligase domain; it reads MNQASTRFIF…DTQILNHFNI (269 aa). Ser17 contributes to the CTP binding site. Position 17 (Ser17) interacts with UTP. ATP is bound by residues 18–23 and Asp75; that span reads SLGKGL. Residues Asp75 and Glu143 each coordinate Mg(2+). Residues 150–152, 190–195, and Lys226 contribute to the CTP site; these read DIE and KTKPTQ. UTP-binding positions include 190 to 195 and Lys226; that span reads KTKPTQ. The region spanning 294 to 532 is the Glutamine amidotransferase type-1 domain; the sequence is NVAIIGKYIK…FISFIKASLD (239 aa). Gly355 provides a ligand contact to L-glutamine. Residue Cys382 is the Nucleophile; for glutamine hydrolysis of the active site. L-glutamine contacts are provided by residues 383–386, Glu406, and Arg462; that span reads MGMQ. Catalysis depends on residues His509 and Glu511.

Belongs to the CTP synthase family. As to quaternary structure, homotetramer.

It carries out the reaction UTP + L-glutamine + ATP + H2O = CTP + L-glutamate + ADP + phosphate + 2 H(+). The enzyme catalyses L-glutamine + H2O = L-glutamate + NH4(+). The catalysed reaction is UTP + NH4(+) + ATP = CTP + ADP + phosphate + 2 H(+). The protein operates within pyrimidine metabolism; CTP biosynthesis via de novo pathway; CTP from UDP: step 2/2. Its activity is regulated as follows. Allosterically activated by GTP, when glutamine is the substrate; GTP has no effect on the reaction when ammonia is the substrate. The allosteric effector GTP functions by stabilizing the protein conformation that binds the tetrahedral intermediate(s) formed during glutamine hydrolysis. Inhibited by the product CTP, via allosteric rather than competitive inhibition. Catalyzes the ATP-dependent amination of UTP to CTP with either L-glutamine or ammonia as the source of nitrogen. Regulates intracellular CTP levels through interactions with the four ribonucleotide triphosphates. In Ehrlichia chaffeensis (strain ATCC CRL-10679 / Arkansas), this protein is CTP synthase.